The following is a 152-amino-acid chain: Transcriptional regulator MraZ (152 aa).

2 consecutive SpoVT-AbrB domains span residues 5–52 (ATMV…TLPA) and 81–124 (ASEC…DEQT).

It belongs to the MraZ family. As to quaternary structure, forms oligomers.

The protein localises to the cytoplasm. It is found in the nucleoid. Its function is as follows. Negatively regulates its own expression and that of the subsequent genes in the proximal part of the division and cell wall (dcw) gene cluster. Acts by binding directly to DNA. May also regulate the expression of genes outside the dcw cluster. This Yersinia enterocolitica serotype O:8 / biotype 1B (strain NCTC 13174 / 8081) protein is Transcriptional regulator MraZ.